We begin with the raw amino-acid sequence, 269 residues long: Eukaryotic translation initiation factor 3 subunit G-1 (269 aa).

Positions 188-266 (AAIRISNLSE…LILSVEWSKP (79 aa)) constitute an RRM domain. Phosphoserine is present on Ser198.

Belongs to the eIF-3 subunit G family. As to quaternary structure, component of the eukaryotic translation initiation factor 3 (eIF-3) complex. The eIF-3 complex interacts with pix.

It is found in the cytoplasm. RNA-binding component of the eukaryotic translation initiation factor 3 (eIF-3) complex, which is involved in protein synthesis of a specialized repertoire of mRNAs and, together with other initiation factors, stimulates binding of mRNA and methionyl-tRNAi to the 40S ribosome. The eIF-3 complex specifically targets and initiates translation of a subset of mRNAs involved in cell proliferation. This subunit can bind 18S rRNA. The protein is Eukaryotic translation initiation factor 3 subunit G-1 of Drosophila melanogaster (Fruit fly).